The sequence spans 366 residues: Alanine racemase (366 aa).

The Proton acceptor; specific for D-alanine role is filled by Lys-33. At Lys-33 the chain carries N6-(pyridoxal phosphate)lysine. A substrate-binding site is contributed by Arg-129. The active-site Proton acceptor; specific for L-alanine is the Tyr-253. Met-301 is a binding site for substrate.

This sequence belongs to the alanine racemase family. Requires pyridoxal 5'-phosphate as cofactor.

The catalysed reaction is L-alanine = D-alanine. Its pathway is amino-acid biosynthesis; D-alanine biosynthesis; D-alanine from L-alanine: step 1/1. Catalyzes the interconversion of L-alanine and D-alanine. May also act on other amino acids. This Xanthomonas oryzae pv. oryzae (strain MAFF 311018) protein is Alanine racemase (alr).